The primary structure comprises 235 residues: Chalcone--flavanone isomerase 2 (235 aa).

Substrate is bound by residues Thr-50 and Ser-192.

This sequence belongs to the chalcone isomerase family.

It catalyses the reaction a chalcone = a flavanone.. The protein operates within secondary metabolite biosynthesis; flavonoid biosynthesis. In terms of biological role, catalyzes the intramolecular cyclization of bicyclic chalcones into tricyclic (S)-flavanones. Responsible for the isomerization of 4,2',4',6'-tetrahydroxychalcone (also termed chalcone) into naringenin. The chain is Chalcone--flavanone isomerase 2 (CHI2) from Chrysanthemum morifolium (Florist's daisy).